Here is a 468-residue protein sequence, read N- to C-terminus: COBRA-like protein 5 (468 aa).

The first 22 residues, 1–22, serve as a signal peptide directing secretion; sequence MELHRCSLLALLLAVTCSVAVA. N-linked (GlcNAc...) asparagine glycosylation is found at Asn-31, Asn-156, Asn-164, and Asn-228. A disordered region spans residues 251–278; that stretch reads GGGKNARAGDGRSRRNSGGGGGHSGGTE. N-linked (GlcNAc...) asparagine glycans are attached at residues Asn-340, Asn-355, and Asn-374. Asn-443 carries the GPI-anchor amidated asparagine lipid modification. Positions 444 to 468 are cleaved as a propeptide — removed in mature form; the sequence is SAPIGPPRSVAAAASAILVVLLLVA.

It belongs to the COBRA family. As to expression, expressed mainly in developing sclerenchyma cells and in vascular bundles.

Its subcellular location is the cell membrane. Involved in determining the orientation of cell expansion, probably by playing an important role in cellulose deposition. May act by recruiting cellulose synthesizing complexes to discrete positions on the cell surface. The protein is COBRA-like protein 5 (BC1) of Oryza sativa subsp. indica (Rice).